The chain runs to 145 residues: D-aminoacyl-tRNA deacylase (145 aa).

A Gly-cisPro motif, important for rejection of L-amino acids motif is present at residues 137-138 (GP).

Belongs to the DTD family. As to quaternary structure, homodimer.

It localises to the cytoplasm. It carries out the reaction glycyl-tRNA(Ala) + H2O = tRNA(Ala) + glycine + H(+). It catalyses the reaction a D-aminoacyl-tRNA + H2O = a tRNA + a D-alpha-amino acid + H(+). An aminoacyl-tRNA editing enzyme that deacylates mischarged D-aminoacyl-tRNAs. Also deacylates mischarged glycyl-tRNA(Ala), protecting cells against glycine mischarging by AlaRS. Acts via tRNA-based rather than protein-based catalysis; rejects L-amino acids rather than detecting D-amino acids in the active site. By recycling D-aminoacyl-tRNA to D-amino acids and free tRNA molecules, this enzyme counteracts the toxicity associated with the formation of D-aminoacyl-tRNA entities in vivo and helps enforce protein L-homochirality. The sequence is that of D-aminoacyl-tRNA deacylase from Salmonella typhimurium (strain LT2 / SGSC1412 / ATCC 700720).